The primary structure comprises 367 residues: DNA-directed RNA polymerase II subunit GRINL1A (367 aa).

Residues 15–40 are a coiled coil; the sequence is DLERRSLAELREMLKRQERLLRNEKF. Positions 29 to 68 are important for transcription repressor activity; that stretch reads KRQERLLRNEKFICKLPDKGKKIFDSFAKLKAAIAECEEV. 3 stretches are compositionally biased toward polar residues: residues 117–131, 176–185, and 205–225; these read SVDNIKSSQTSQNQG, RVSSQAEDTS, and GEQQSENASTKNLTGLSSGTQ. Disordered stretches follow at residues 117 to 185, 203 to 225, and 254 to 281; these read SVDN…EDTS, DQGEQQSENASTKNLTGLSSGTQ, and PFRQNDSSSHCQKSRSPISSEERRRRDK. Residues 226–297 are interaction with Pol II; that stretch reads KKPHYMEVLE…TAARLLPLHH (72 aa). Position 269 is a phosphoserine (S269). Positions 298-313 are important for transcription repressor activity; sequence MPTQLLSIEESLALQK. Positions 300 to 329 form a coiled coil; it reads TQLLSIEESLALQKQRKQKYEEMQAKLAAQ. The interval 314–339 is interaction with Pol II; it reads QRKQKYEEMQAKLAAQKLAERLNIKM. Positions 335 to 367 are disordered; the sequence is LNIKMRSYNPEGESSGRYREVRDEDDDWSSDEF. The span at 357–367 shows a compositional bias: acidic residues; that stretch reads DEDDDWSSDEF.

Belongs to the GRINL1 family. As to quaternary structure, component of the Pol II(G) complex, which contains the RNA polymerase II (Pol II) core complex subunits and POLR2M isoform 1. Pol II(G) appears to be an abundant form of Pol II. Post-translationally, dephosphorylated at Ser-269 by the PNUTS-PP1 complex, promoting RNA polymerase II transcription pause-release.

The protein localises to the nucleus. Its function is as follows. Appears to be a stable component of the Pol II(G) complex form of RNA polymerase II (Pol II). Pol II synthesizes mRNA precursors and many functional non-coding RNAs and is the central component of the basal RNA polymerase II transcription machinery. May play a role in the Mediator complex-dependent regulation of transcription activation. Acts as a negative regulator of transcriptional activation; this repression is relieved by the Mediator complex, which restores Pol II(G) activator-dependent transcription to a level equivalent to that of Pol II. In Pongo abelii (Sumatran orangutan), this protein is DNA-directed RNA polymerase II subunit GRINL1A (POLR2M).